The primary structure comprises 430 residues: Maltoporin (430 aa).

A signal peptide spans 1–23 (MNNKKTLLAVAISGMMFATSAAA).

The protein belongs to the porin LamB (TC 1.B.3) family. Homotrimer formed of three 18-stranded antiparallel beta-barrels, containing three independent channels.

It localises to the cell outer membrane. It catalyses the reaction beta-maltose(in) = beta-maltose(out). In terms of biological role, involved in the transport of maltose and maltodextrins. This is Maltoporin from Actinobacillus succinogenes (strain ATCC 55618 / DSM 22257 / CCUG 43843 / 130Z).